Here is a 144-residue protein sequence, read N- to C-terminus: Apidaecins type 22 (144 aa).

A signal peptide spans 1-19 (MKNFALAILVVTFVVAVFG). 4 propeptides span residues 20–42 (NTNL…EAEP), 63–70 (EAEPEAEP), 91–98 (EAEPEAEP), and 119–126 (EAEPEAEP). The interval 20–144 (NTNLDPPTRP…PQPRPPHPRI (125 aa)) is disordered. Residues 134 to 144 (IPQPRPPHPRI) show a composition bias toward pro residues.

Belongs to the apidaecin family.

It localises to the secreted. In terms of biological role, apidaecins have bactericidal activity; predominantly against Gram-negative bacteria. They seem to interfere with cell propagation. The polypeptide is Apidaecins type 22 (Apis mellifera (Honeybee)).